Consider the following 504-residue polypeptide: E3 ubiquitin-protein ligase dbl4 (504 aa).

The segment at 127–338 is TRIAD supradomain; it reads HEGTCEICYD…NNWYTCNRYE (212 aa). Residues cysteine 131, cysteine 134, cysteine 147, histidine 149, cysteine 152, cysteine 155, cysteine 173, cysteine 178, cysteine 217, cysteine 222, cysteine 244, cysteine 246, cysteine 251, cysteine 254, histidine 259, cysteine 264, cysteine 291, and cysteine 294 each coordinate Zn(2+). The segment at 131-178 adopts an RING-type 1 zinc-finger fold; it reads CEICYDEGCLPFFSAECDHEFCLACYRQYLDSRISEGESVIQCPEESC. The segment at 197 to 264 adopts an IBR-type zinc-finger fold; it reads DRYHRLLDRS…GHDNHQPTIC (68 aa). The RING-type 2; atypical zinc finger occupies 291–320; it reads CPKCSTTIEKNGGCNHMTCKKCKYEFCWVC. Residue cysteine 304 is part of the active site. The Zn(2+) site is built by cysteine 309, cysteine 312, cysteine 317, cysteine 320, histidine 327, and cysteine 334.

This sequence belongs to the RBR family.

The protein localises to the cytoplasm. Its subcellular location is the nucleus. It catalyses the reaction [E2 ubiquitin-conjugating enzyme]-S-ubiquitinyl-L-cysteine + [acceptor protein]-L-lysine = [E2 ubiquitin-conjugating enzyme]-L-cysteine + [acceptor protein]-N(6)-ubiquitinyl-L-lysine.. The protein operates within protein modification; protein ubiquitination. In terms of biological role, probable ubiquitin-protein ligase involved in the degradation-related ubiquitination of histones. Contributes to the post-translational regulation of histone protein levels by polyubiquitination of excess histones for subsequent degradation. This chain is E3 ubiquitin-protein ligase dbl4, found in Schizosaccharomyces pombe (strain 972 / ATCC 24843) (Fission yeast).